The chain runs to 77 residues: U8-lycotoxin-Ls1p (77 aa).

An N-terminal signal peptide occupies residues 1–20 (MKLMIFTGLVLFAIVSLIEA). Residues 21–26 (QAENEK) constitute a propeptide that is removed on maturation.

It belongs to the neurotoxin 19 (CSTX) family. 08 (U8-Lctx) subfamily. Contains 4 disulfide bonds. Expressed by the venom gland.

The protein localises to the secreted. This Lycosa singoriensis (Wolf spider) protein is U8-lycotoxin-Ls1p.